A 114-amino-acid polypeptide reads, in one-letter code: Holo-[acyl-carrier-protein] synthase (114 aa).

Residues Asp-5 and Glu-50 each coordinate Mg(2+).

This sequence belongs to the P-Pant transferase superfamily. AcpS family. Mg(2+) is required as a cofactor.

Its subcellular location is the cytoplasm. The catalysed reaction is apo-[ACP] + CoA = holo-[ACP] + adenosine 3',5'-bisphosphate + H(+). In terms of biological role, transfers the 4'-phosphopantetheine moiety from coenzyme A to a Ser of acyl-carrier-protein. This chain is Holo-[acyl-carrier-protein] synthase, found in Campylobacter curvus (strain 525.92).